A 447-amino-acid polypeptide reads, in one-letter code: Methylenetetrahydrofolate--tRNA-(uracil-5-)-methyltransferase TrmFO (447 aa).

An FAD-binding site is contributed by 9-14 (GGGLAG).

This sequence belongs to the MnmG family. TrmFO subfamily. FAD serves as cofactor.

It localises to the cytoplasm. The enzyme catalyses uridine(54) in tRNA + (6R)-5,10-methylene-5,6,7,8-tetrahydrofolate + NADH + H(+) = 5-methyluridine(54) in tRNA + (6S)-5,6,7,8-tetrahydrofolate + NAD(+). It carries out the reaction uridine(54) in tRNA + (6R)-5,10-methylene-5,6,7,8-tetrahydrofolate + NADPH + H(+) = 5-methyluridine(54) in tRNA + (6S)-5,6,7,8-tetrahydrofolate + NADP(+). In terms of biological role, catalyzes the folate-dependent formation of 5-methyl-uridine at position 54 (M-5-U54) in all tRNAs. In Paramagnetospirillum magneticum (strain ATCC 700264 / AMB-1) (Magnetospirillum magneticum), this protein is Methylenetetrahydrofolate--tRNA-(uracil-5-)-methyltransferase TrmFO.